A 2963-amino-acid chain; its full sequence is MIPIYLRQKLISYALIYLVAIQPIMPVMAAGIDVAQGSTALDKAGNGVPVVNIAPPNSAGVSHNVYNQFNVGSEGVILNNATDRLTQTQLGGLIQSNANLNGKAAGAIINEVVSANRSQLNGYLEVGGKAAAVMVANPYGITCDGCGFINTPNVTLTTGKPMMDTNGKLQSLDVTQGAISIQGKGLDASQSSALSLISRANEINAQIHAQDLTVIAGSNRVDSAGHVSERQGQGDVPQVSIDTGALGGMYANRIRLVSSEKGVGVNLGNLNARQGDIQLDSKGKLTVNNAVAHGDIIASADQLHLQGHQRAQGNITLNSHGESRLDNATLLAGDTLAVKAGGKITSKESQLNAGVDSAGNIGEKGTVSLQGSELALQQSHVAAAAVSVVSSGDIVQDKESSLTARQLKLSGQHLELAGQLAANNDLSITGQSLRGSKTASVGSQKNITFNLAGDSEWAGQMVAGNDLIFSGQSLTNHGQLLAANQMHFEGLGLDNQGQILAADINIAVHRLNNQGQLQGDKSLLLTADSLVQSTRGTMNSGRALTLRAAEMDISGDLQSQILDVKGDNWHNHGNVVAQEHAQLRLGHTIDNRGVLVSAGDMDLSFNQLSNQGRILGAELALSGKNISNSGQLVGKQQLSLQLDEGYQGTSSGELKSDGLLSVTADEINNQGHWESGSLNTTAQQLTNNGKVLSVGSQNINLSGSLTNQQLGQFLTDGEFIIVAEQVINSGLLQGNQAVTLNGLKQYQGGTGSQLLTKGVGEIHSDSVNNAGLIQAGSLSLTGEVLDNTGTLSGLSTLHIDSHNEIINQARGQLLSDNTIKLDSEQLVNNGLMQGTELVLASQHLTNNGTLLGLTYLELQAVNLTNSSAGKILSGQDLHFTTSHLQQNGQWTALRDLTGEIKGALDFSGAMAAGKQLSLQVDGDFNQRGNLQGNDVSITSRGVITNSGQLAAGSGSLALNGAAINQEQSGSLQSGGQISLTSRGDINNRGFVGAAGDLLLQAIGAVNNTSLLYAGGSMRLLADAIYNVRGDILAGNHLWMQRDNAGNSNREIINSSGNIETQQGDMVLNTASLLNRRDGFSVTEKTGAVNSGGIANVGATNILISSGYFKPGEVTHYSKTVTGGGHHGNVSTVNLLGLVPSARKQKLSTSSSIVTVDSPYDVGRIVAGRDINISANTLVNQASQMSAGRNALLQGQSLNNQSYQSGTLTQYLVYTNTRDTNPEYNLFEFKLSGSPTYEISNDGQLYQGVIQAVGSVSANFTQNLSNTSVKPNIGSIVHQVTQPSLTATTVPSELATKPNSGAAQVAPDSNNGDLVALYNQSGTALTFGLGTDGKPLTRAQLSDYPLPDSNNGLFVVNSEPGSRYLISTNPTLEKLGNVDSTLLSGLQAMLGRQPQTSVAIERNPQWTQQDNFLGSDYLLKKINLDAEHDYRFLGDAAFDTRYINNAVLSQTGQRYLNGVGSDLSQMQYLLDNAAQSQKKLDLKLGVSLTPEQVAQLSHSIVWWENINVNGQTVLAPKLYLAKAEQAHLQGSVISGNKVELNAGSVTNSGVLKGVELLAIASQDTITNEKGGLLTSEGALNLTALNNISNLSSSISGDRVAITSQNGDIINQTQTRQWSADQSRQPGYWSGIKTQSMTQTEVGETAAITAGKALTLAAGNNIAITGAKVTAAGDIGIQAAHDINIIANDLYSAQQQTLGRNRNIELNEQHESQSSHVSAGGTLTAHAGRDITLSASHLGADGNATLQAERDVNLLVQEKSTRNQHIDSEDKTTGYTRSTLSSGGDLTASAGRDINSQAAAVTAENTLALNAGRDINLNAQESRQYNESHGKNYKRVDEAIRQQGTELASGKGTQVHAGQDINLHAASISAKGDLALQAGRDIAVNSATESDYHFFEEKKTKKKLVSKTTIHNVEEDFATTEKSSALVGNNVSLSAGNNLIVKGSSVVGDGTVVLKADNNVDIVAATEQQSSYRLNEKKTSGMFSGGGLGVTLGSKSSRQQINQEGSKQSESASAVGSTAGNVSILAGAQAHISGSDVIAGKDLNVIAGTIKVDPGNDVLKRRQIYEQKQSGLTLSLSSPFTDALLAINSKLKQASDAGSDKLSALYGAQAAREAWVGVDGTMDMMASKPGGPAADPGASIKLQLSVGASHSKSTSELAQNQTRGSSLTAGDNLTMVASGDHEQSGDLSVVGSGVTGNKVTLVAKNDVLLAAASNNSEQTSRDSSSGWNAGVHLSLGKETGIGIAANGFMSKGNSDGKTTDYANARINAKEALAINSGRDTVLSGAQVLGDKITAEIGRDLTISSLQDSDNYNSIQKDASAGFSFTFGPSGGGSASFSLGKTKIESKYASVGDQSGFFAGSKGFDLNVGNHTQLNGGVLASTAGAQDNLLSTGTLGWGDIHNQAEYKATSTRIGYSTDAPMPTLGMANAHGSASGTTRSAVASGEIEIRNQGEQQQDVTTLSRDTDSANGRIDKIFDESKVKDQMAFTQGVTQLATQLVGDVSSWNMKQAERSAAEKLEKDPKYQNATREKRQEMIYASADYKAAQESFGIGSSFWTAGMAVSAALTGLAGNADIGSISSAAVAPYLAGQIKKYTTDKDDKVNKTINILAHAILGGIVAQMQGNSATAGALGGGGGELAARIYMDQVHPGKKVSDLSEADKKIVSAIGTLTAGILGGLSTDSSTGLITGAQAGKNAVEDNNLSFGKGMADIGMSQTSLGVSMLRNGTSPDEVSAALVKNSLGQTPEGQDPIRGLLTAWAEFFGVPVTALIANGPMTVERAAEIVSSGVPTSEAKLIQYTAAKAFLAVAKNLPQGTTLVSTPEGISFRIDQPKHLSSVDGFTQKAGISGGHNADAFYEAAKQYDVKILSETSTGAKGITEVKYQIPTKDRAGNLTGGYKPAVETKTIYDPNVFTDQKILELGQQAAAKGYKDAMASKSGQASATVDGVSFRIYVDKDTGRVRNFHPN.

The first 29 residues, 1-29 (MIPIYLRQKLISYALIYLVAIQPIMPVMA), serve as a signal peptide directing secretion. The segment at 35-320 (AQGSTALDKA…AQGNITLNSH (286 aa)) is two-partner system transport domain (TPS). The interval 573-1074 (GNVVAQEHAQ…MVLNTASLLN (502 aa)) is FHA-1. A receptor binding domain (RBD) region spans residues 1075–1342 (RRDGFSVTEK…KPLTRAQLSD (268 aa)). The tract at residues 1343 to 1528 (YPLPDSNNGL…LAKAEQAHLQ (186 aa)) is YP domain. The segment at 1529–1751 (GSVISGNKVE…ATLQAERDVN (223 aa)) is periplasmic FHA-1 repeat (pFR). Over residues 1759–1770 (TRNQHIDSEDKT) the composition is skewed to basic and acidic residues. Disordered stretches follow at residues 1759–1787 (TRNQ…LTAS) and 1992–2012 (SKSS…SASA). Residues 1762 to 2314 (QHIDSEDKTT…DSDNYNSIQK (553 aa)) are FHA-2. Polar residues predominate over residues 1771–1782 (TGYTRSTLSSGG). Residues 2694 to 2697 (VEDN) carry the VEDN CT cleavage motif motif. The C-terminal effector domain (CT) stretch occupies residues 2694–2963 (VEDNNLSFGK…TGRVRNFHPN (270 aa)).

In the N-terminal section; belongs to the CdiA toxin family. The protein in the C-terminal section; belongs to the bacterial EndoU family. Forms a 1:1 complex with cognate immunity protein CdiI.

It localises to the secreted. It is found in the target cell. The protein resides in the target cell cytoplasm. Functionally, toxic component of a toxin-immunity protein module, which functions as a cellular contact-dependent growth inhibition (CDI) system. CDI modules allow bacteria to communicate with and inhibit the growth of closely related neighboring bacteria in a contact-dependent fashion. Targeting of the CT domain (residues 2824-2963) in the absence of immunity protein inhibits cell growth and causes tRNA(UUC-Glu) cleavage in the anticodon loop; expression of cognate immunity protein CdiI-43969 neutralizes growth inhibition and tRNA(UUC-Glu) remains intact, whereas non-cognate immunity proteins do not confer protection from the toxic effects. Its function is as follows. The CdiA protein is thought to be exported from the cell through the central lumen of CdiB, the other half of its two-partner system (TPS). The TPS domain probably remains associated with CdiB while the FHA-1 domain forms an extended filament with the receptor-binding domain (RBD) at its extremity; in the secretion arrested state the C-terminus of the RBD and YP domains form a hairpin-like structure as the FHA-2, PT and CT domains are periplasmic. The YP domain is probably responsible for this arrest at the point where it re-enters the host cell periplasm. Upon binding to a target cell outer membrane receptor a signal is transmitted to activate secretion. The filament elongates slightly, the rest of CdiA is secreted and the FHA-2 domain becomes stably associated with the target cell's outer membrane where it facilitates entry of the toxic CT domain into the target cell periplasm. From there the toxic CT domain is cleaved and gains access to the target cell cytoplasm via an inner membrane protein. This chain is tRNA nuclease CdiA, found in Yersinia mollaretii (strain ATCC 43969 / DSM 18520 / CIP 103324 / CNY 7263 / WAIP 204).